The sequence spans 674 residues: Transcription activator of gluconeogenesis PMAA_028970 (674 aa).

The tract at residues 1–46 (MMDTDKDDLPSATDHSEHESGDAVKVEGGASKTASNSKDPSRPRRK) is disordered. Over residues 14 to 25 (DHSEHESGDAVK) the composition is skewed to basic and acidic residues. The segment at residues 52 to 80 (CFACQRAHLTCGDERPCQRCIKRGLQDAC) is a DNA-binding region (zn(2)-C6 fungal-type). Disordered regions lie at residues 117-181 (ISPT…ATPA), 250-321 (TGAG…SGLY), 344-374 (IGSN…SPMK), and 519-557 (NLNV…PGPN). Positions 120-148 (TEYTQNGTNNAQQQQQKSGTIYASSTPSY) are enriched in polar residues. Low complexity predominate over residues 149–163 (NNNNGTFDTNNATNT). Polar residues-rich tracts occupy residues 269–278 (GQRSNSQQFG) and 285–294 (TTESPSQQSF). Low complexity-rich tracts occupy residues 348-366 (TFAS…IAPS) and 529-540 (NTSSQSDSTSSS).

This sequence belongs to the ERT1/acuK family.

It localises to the nucleus. Its function is as follows. Transcription factor which regulates nonfermentable carbon utilization. Activator of gluconeogenetic genes. This Talaromyces marneffei (strain ATCC 18224 / CBS 334.59 / QM 7333) (Penicillium marneffei) protein is Transcription activator of gluconeogenesis PMAA_028970.